A 124-amino-acid chain; its full sequence is Chemotaxis protein CheY1 (124 aa).

Residues 2–120 (KLLVVDDSST…VLKEKLEVVL (119 aa)) form the Response regulatory domain. Asp-7, Asp-8, Asp-53, and Asn-55 together coordinate Mg(2+). Asp-53 is modified (4-aspartylphosphate).

As to quaternary structure, interacts (when phosphorylated) with FliM. The cofactor is Mg(2+). Post-translationally, phosphorylated by CheAY. Dephosphorylated (inactivated) by CheZ.

The protein resides in the cytoplasm. Chemotactic response regulator protein that modulates the rotation direction of bacterial flagellar motors. Plays an important role in the colonization and infection of Helicobacter pylori. Upon phosphorylation by CheA, interacts with the flagellar motor protein FliM to cause clockwise flagellar rotation and bacterial reversals, as opposed to straight swimming when CheY1 is not phosphorylated. The polypeptide is Chemotaxis protein CheY1 (Helicobacter pylori (strain ATCC 700392 / 26695) (Campylobacter pylori)).